Here is a 170-residue protein sequence, read N- to C-terminus: Der GTPase-activating protein YihI (170 aa).

Disordered stretches follow at residues 1–96 (MKKP…LSPQ) and 145–170 (LSYD…RGGN). The segment covering 20–30 (TREELNQEARD) has biased composition (basic and acidic residues). The span at 31-40 (RKRLKKHRGH) shows a compositional bias: basic residues. Acidic residues predominate over residues 147-159 (YDDEEDEEEDEKQ).

This sequence belongs to the YihI family. As to quaternary structure, interacts with Der.

Its function is as follows. A GTPase-activating protein (GAP) that modifies Der/EngA GTPase function. May play a role in ribosome biogenesis. The protein is Der GTPase-activating protein YihI of Salmonella arizonae (strain ATCC BAA-731 / CDC346-86 / RSK2980).